The chain runs to 130 residues: Capsid protein (130 aa).

The viral RNA-binding stretch occupies residues 31 to 104; the sequence is EWLSNNSRSQ…FAATDDVTVI (74 aa).

It belongs to the Leviviricetes capsid protein family. As to quaternary structure, homodimer. The capsid proteins form dimers that assemble by group of 5. Twelve such pentamers are linked together with free dimers. The homodimers binds to the viral RNA via an operator hairpin, but also to many other RNA sequences in the viral genome; this interaction probably shifts the virus from the replicative to the assembly phase and ensures specific encapsidation of the viral genome.

The protein resides in the virion. Capsid protein self-assembles to form an icosahedral capsid with a T=3 symmetry, about 26 nm in diameter, and consisting of 89 capsid proteins dimers (178 capsid proteins). Involved in viral genome encapsidation through the interaction between a capsid protein dimer and the multiple packaging signals present in the RNA genome. The capsid also contains 1 copy of the A2 maturation protein. In terms of biological role, acts as a translational repressor of viral replicase synthesis late in infection. This latter function is the result of capsid protein interaction with an RNA hairpin which contains the replicase ribosome-binding site. The sequence is that of Capsid protein from Escherichia coli (Bacteriophage GA).